A 461-amino-acid polypeptide reads, in one-letter code: Bacterial E1-like protein BilD (461 aa).

Residue Cys385 is the Glycyl thioester intermediate of the active site.

In terms of biological role, component of the Bil (bacterial ISG15-like) antiviral defense system, composed of BilA, BilB, BilC and BilD. The Bil system specifically conjugates a ubiquitin-like moiety (bilA) to the bacteriophage central tail fiber (CTF, or tip attachment protein J) via reactions involving E1 (bilD) and E2 (bilB). Modifies CTF of phage SECphi27 and SECphi4, which probably interferes with assembly of the phage tail. Also modifies T5 baseplate hub protein pb3 (gene D16), but not gp27 of phage T6 (Bil defends against T6). BilD (E1) catalyzes the first step in conjugation. Activates ubiquitin-like BilA by first adenylating its C-terminal glycine residue with ATP, and then conjugates it to the side chain of a cysteine residue in E1 (this protein), yielding a ubiquitin-E1 thioester and free AMP. Bil-encoding bacteria produce mostly defective phage SECphi27, many of which have phage assembly defects, including no tails. SECphi27 phage progeny produced in E.coli with the Bil system inject less DNA into naive host cells, maybe because the phage are less able to adsorb and inject their DNA into host cells. Its function is as follows. Expression of the Bil system in E.coli (strain MG1655) confers about 100-fold resistance to phage SECphi27, SECphi18, SECphi6, SECphi4 and T5, but not to SECphi17. When cells expressing the Bil system are infected by phage SECphi27 at low multiplicity of infection (0.03 MOI) the culture survives, at 3.0 MOI the culture collapses at the same time as cells without the Bil system. This is Bacterial E1-like protein BilD from Collimonas sp. (strain OK412).